Here is a 348-residue protein sequence, read N- to C-terminus: Protein RecA (348 aa).

Gly64–Thr71 contributes to the ATP binding site. Over residues Tyr325 to Leu335 the composition is skewed to basic and acidic residues. Positions Tyr325–Glu348 are disordered. The segment covering Glu336–Glu348 has biased composition (acidic residues).

Belongs to the RecA family.

Its subcellular location is the cytoplasm. Functionally, can catalyze the hydrolysis of ATP in the presence of single-stranded DNA, the ATP-dependent uptake of single-stranded DNA by duplex DNA, and the ATP-dependent hybridization of homologous single-stranded DNAs. It interacts with LexA causing its activation and leading to its autocatalytic cleavage. This chain is Protein RecA, found in Listeria seeligeri.